The sequence spans 574 residues: Ankyrin repeat protein B18 (574 aa).

ANK repeat units follow at residues Thr-56 to Met-87, Ile-135 to Phe-164, Asp-167 to Ala-213, Cys-217 to Ile-249, His-253 to Glu-285, and Glu-327 to Ala-356. Residues Asn-541–Val-574 form the F-box domain.

The sequence is that of Ankyrin repeat protein B18 from Homo sapiens (Human).